Here is a 647-residue protein sequence, read N- to C-terminus: Exoribonuclease 2 (647 aa).

Residues 192-519 (RIDLTSLDFV…NHRLLKAIIQ (328 aa)) enclose the RNB domain. An S1 motif domain is found at 564-646 (EQRFTAEIID…ETRNIVARPT (83 aa)).

This sequence belongs to the RNR ribonuclease family. RNase II subfamily.

It localises to the cytoplasm. The catalysed reaction is Exonucleolytic cleavage in the 3'- to 5'-direction to yield nucleoside 5'-phosphates.. Involved in mRNA degradation. Hydrolyzes single-stranded polyribonucleotides processively in the 3' to 5' direction. The polypeptide is Exoribonuclease 2 (Photorhabdus laumondii subsp. laumondii (strain DSM 15139 / CIP 105565 / TT01) (Photorhabdus luminescens subsp. laumondii)).